Reading from the N-terminus, the 180-residue chain is ATP-dependent protease subunit HslV (180 aa).

Residue T5 is part of the active site. Positions 161, 164, and 167 each coordinate Na(+).

This sequence belongs to the peptidase T1B family. HslV subfamily. As to quaternary structure, a double ring-shaped homohexamer of HslV is capped on each side by a ring-shaped HslU homohexamer. The assembly of the HslU/HslV complex is dependent on binding of ATP.

It is found in the cytoplasm. It carries out the reaction ATP-dependent cleavage of peptide bonds with broad specificity.. Allosterically activated by HslU binding. In terms of biological role, protease subunit of a proteasome-like degradation complex believed to be a general protein degrading machinery. This is ATP-dependent protease subunit HslV from Campylobacter jejuni subsp. jejuni serotype O:6 (strain 81116 / NCTC 11828).